A 207-amino-acid polypeptide reads, in one-letter code: Protein N-terminal glutamine amidohydrolase (207 aa).

Catalysis depends on residues cysteine 30, histidine 83, and aspartate 99.

Belongs to the NTAQ1 family. As to quaternary structure, monomer.

It is found in the cytoplasm. The protein resides in the cytosol. It localises to the nucleus. It catalyses the reaction N-terminal L-glutaminyl-[protein] + H2O = N-terminal L-glutamyl-[protein] + NH4(+). Its function is as follows. Mediates the side-chain deamidation of N-terminal glutamine residues to glutamate, an important step in N-end rule pathway of protein degradation. Conversion of the resulting N-terminal glutamine to glutamate renders the protein susceptible to arginylation, polyubiquitination and degradation as specified by the N-end rule. Does not act on substrates with internal or C-terminal glutamine and does not act on non-glutamine residues in any position. Does not deaminate acetylated N-terminal glutamine. With the exception of proline, all tested second-position residues on substrate peptides do not greatly influence the activity. In contrast, a proline at position 2, virtually abolishes deamidation of N-terminal glutamine. The chain is Protein N-terminal glutamine amidohydrolase (NTAQ1) from Bos taurus (Bovine).